A 167-amino-acid chain; its full sequence is Osteocalcin 2a (167 aa).

The N-terminal stretch at 1-18 is a signal peptide; the sequence is MKSLTLLTICAVLSVSLS. Residues 19-118 constitute a propeptide that is removed on maturation; the sequence is MNDLALDVVL…LASVLLRRKR (100 aa). Positions 28-99 are disordered; that stretch reads LDPAPDPATE…TTEDPAAATE (72 aa). Residues 38-87 show a composition bias toward low complexity; that stretch reads PAPAADSSASSSASSSSSSASDSSASASDSSDSDSSSASSSSSSSESASA. Positions 131–163 constitute a Gla domain; that stretch reads QVESLSEVCELNLACEHMAETAGIVAAYTAYYG. Ca(2+) is bound by residues Glu-133, Glu-137, and Glu-140. 3 positions are modified to 4-carboxyglutamate: Glu-133, Glu-137, and Glu-140. Cysteines 139 and 145 form a disulfide.

Belongs to the osteocalcin/matrix Gla protein family. Post-translationally, gamma-carboxyglutamate residues are formed by vitamin K dependent carboxylation. These residues are essential for the binding of calcium.

Its subcellular location is the secreted. Functionally, binds strongly to apatite and calcium. This Oncorhynchus mykiss (Rainbow trout) protein is Osteocalcin 2a.